The sequence spans 246 residues: Bis(5'-nucleosyl)-tetraphosphatase PrpE [asymmetrical] (246 aa).

The protein belongs to the PrpE family. Requires Ni(2+) as cofactor.

The catalysed reaction is P(1),P(4)-bis(5'-guanosyl) tetraphosphate + H2O = GMP + GTP + 2 H(+). Functionally, asymmetrically hydrolyzes Ap4p to yield AMP and ATP. This Halalkalibacterium halodurans (strain ATCC BAA-125 / DSM 18197 / FERM 7344 / JCM 9153 / C-125) (Bacillus halodurans) protein is Bis(5'-nucleosyl)-tetraphosphatase PrpE [asymmetrical].